The chain runs to 109 residues: Hainantoxin-XVIII-3 (109 aa).

An N-terminal signal peptide occupies residues 1 to 18 (MKLSIIIIATSLVIAVVA). A propeptide spanning residues 19–46 (FPSKDSKAIENDKTEQRMEIVVQETARA) is cleaved from the precursor. Intrachain disulfides connect cysteine 47/cysteine 62, cysteine 55/cysteine 68, cysteine 59/cysteine 108, and cysteine 61/cysteine 81.

Belongs to the neurotoxin 25 family. F7 subfamily. As to expression, expressed by the venom gland.

It is found in the secreted. Putative ion channel inhibitor. The protein is Hainantoxin-XVIII-3 of Cyriopagopus hainanus (Chinese bird spider).